Reading from the N-terminus, the 494-residue chain is Maintenance of mitochondrial morphology protein 1 (494 aa).

The Lumenal portion of the chain corresponds to 1–22 (MSSQPGDPATLPAQSSLSFTQG). The helical transmembrane segment at 23 to 43 (FLLGQLSVVLVLAAFIKFFIF) threads the bilayer. The Cytoplasmic segment spans residues 44-494 (GEAPPPPSRG…GSLPEAVTPG (451 aa)). 4 disordered regions span residues 50-98 (PSRG…SSST), 274-330 (PPLD…KSNV), 398-426 (VRTGDDAETASNGPRSTVSADIGGSARHE), and 449-494 (VASR…VTPG). Over residues 54–64 (LSHRSATHRRS) the composition is skewed to basic residues. Polar residues-rich tracts occupy residues 65-76 (NSIYSNSPQEAG) and 85-98 (STSNVLRPVPSSST). The region spanning 130–387 (QPESLDWFNV…EPRVQVVGLP (258 aa)) is the SMP-LTD domain. Residues 274 to 286 (PPLDTPSHSPSPP) show a composition bias toward pro residues. Composition is skewed to polar residues over residues 406–416 (TASNGPRSTVS) and 466–477 (RSMTRQESSGDL).

This sequence belongs to the MMM1 family. As to quaternary structure, homodimer. Component of the ER-mitochondria encounter structure (ERMES) or MDM complex, composed of mmm1, mdm10, mdm12 and mdm34. A mmm1 homodimer associates with one molecule of mdm12 on each side in a pairwise head-to-tail manner, and the SMP-LTD domains of mmm1 and mdm12 generate a continuous hydrophobic tunnel for phospholipid trafficking.

Its subcellular location is the endoplasmic reticulum membrane. Functionally, component of the ERMES/MDM complex, which serves as a molecular tether to connect the endoplasmic reticulum (ER) and mitochondria. Components of this complex are involved in the control of mitochondrial shape and protein biogenesis, and function in nonvesicular lipid trafficking between the ER and mitochondria. The mdm12-mmm1 subcomplex functions in the major beta-barrel assembly pathway that is responsible for biogenesis of all outer membrane beta-barrel proteins, and acts in a late step after the SAM complex. The mdm10-mdm12-mmm1 subcomplex further acts in the TOM40-specific pathway after the action of the mdm12-mmm1 complex. Essential for establishing and maintaining the structure of mitochondria and maintenance of mtDNA nucleoids. This chain is Maintenance of mitochondrial morphology protein 1, found in Aspergillus clavatus (strain ATCC 1007 / CBS 513.65 / DSM 816 / NCTC 3887 / NRRL 1 / QM 1276 / 107).